Consider the following 77-residue polypeptide: Protein IDA (77 aa).

The N-terminal stretch at 1-26 is a signal peptide; the sequence is MAPCRTMMVLLCFVLFLAASSSCVAA. Positions 56–69 are RLK5-binding; that stretch reads GVPIPPSAPSKRHN.

As to quaternary structure, interaction with RLK5. Expressed specifically in the floral abscission zone.

It localises to the secreted. The protein localises to the extracellular space. Its function is as follows. Involved in an ethylene-independent separation step of floral abscission. Promotes abscission zone (AZ) cells rounding. May act with RLK5 and HSL2 as ligand-receptor pairs. This is Protein IDA from Arabidopsis thaliana (Mouse-ear cress).